A 997-amino-acid chain; its full sequence is Pro-apoptotic serine protease NMA111 (997 aa).

Positions 1-43 (MTISLSNIKKRDHSKISDGTSGESSLVKRKQLESATGDQEEEY) are disordered. The tract at residues 83–273 (VVSIHFSQVA…LPLDRILRAL (191 aa)) is serine protease. Residues histidine 121, aspartate 152, and serine 235 each act as charge relay system in the active site. 2 PDZ domains span residues 300 to 378 (RRLG…QRGG) and 779 to 854 (EEWI…VRDG).

It belongs to the peptidase S1C family. Interacts with BIR1.

The protein resides in the nucleus. Functionally, nuclear serine protease which mediates apoptosis through proteolysis of the apoptotic inhibitor BIR1. This is Pro-apoptotic serine protease NMA111 (NMA111) from Saccharomyces cerevisiae (strain YJM789) (Baker's yeast).